Here is a 287-residue protein sequence, read N- to C-terminus: Putative syntaxin-4 (287 aa).

Over 1–262 the chain is Cytoplasmic; sequence MHQISGINAA…NRKWKIVTCI (262 aa). Residues 65–97 are a coiled coil; the sequence is KCRKLNDHVDKFIAQARGIRRRLADASEELVQY. The 63-residue stretch at 184 to 246 folds into the t-SNARE coiled-coil homology domain; the sequence is FDDMKNRATD…EQAQQNVRQA (63 aa). The chain crosses the membrane as a helical; Anchor for type IV membrane protein span at residues 263–283; sequence ALIVLLLVVVYLLSHFLGAII. At 284 to 287 the chain is on the extracellular side; the sequence is PGWK.

The protein belongs to the syntaxin family.

Its subcellular location is the membrane. Functionally, potentially involved in docking of synaptic vesicles at presynaptic active zones. The protein is Putative syntaxin-4 (syx-4) of Caenorhabditis elegans.